A 111-amino-acid chain; its full sequence is Ribonuclease P protein component (111 aa).

It belongs to the RnpA family. Consists of a catalytic RNA component (M1 or rnpB) and a protein subunit.

It catalyses the reaction Endonucleolytic cleavage of RNA, removing 5'-extranucleotides from tRNA precursor.. In terms of biological role, RNaseP catalyzes the removal of the 5'-leader sequence from pre-tRNA to produce the mature 5'-terminus. It can also cleave other RNA substrates such as 4.5S RNA. The protein component plays an auxiliary but essential role in vivo by binding to the 5'-leader sequence and broadening the substrate specificity of the ribozyme. The sequence is that of Ribonuclease P protein component from Streptococcus thermophilus (strain CNRZ 1066).